A 303-amino-acid chain; its full sequence is Kynurenine formamidase (303 aa).

An HGGXW motif is present at residues 95-99; sequence HGGYW. S164 acts as the Nucleophile in catalysis. Active-site residues include D247 and H279.

Belongs to the kynurenine formamidase family. In terms of assembly, homodimer.

It localises to the cytoplasm. It is found in the cytosol. The protein localises to the nucleus. It catalyses the reaction N-formyl-L-kynurenine + H2O = L-kynurenine + formate + H(+). It participates in amino-acid degradation; L-tryptophan degradation via kynurenine pathway; L-kynurenine from L-tryptophan: step 2/2. Catalyzes the hydrolysis of N-formyl-L-kynurenine to L-kynurenine, the second step in the kynurenine pathway of tryptophan degradation. Kynurenine may be further oxidized to nicotinic acid, NAD(H) and NADP(H). Required for elimination of toxic metabolites. The chain is Kynurenine formamidase from Homo sapiens (Human).